The chain runs to 335 residues: Biotin synthase (335 aa).

Positions 39–267 constitute a Radical SAM core domain; it reads TKIQVCKLIS…ASDVRLSAGR (229 aa). Positions 54, 58, and 61 each coordinate [4Fe-4S] cluster. [2Fe-2S] cluster is bound by residues cysteine 98, cysteine 130, cysteine 190, and arginine 262.

The protein belongs to the radical SAM superfamily. Biotin synthase family. As to quaternary structure, homodimer. [4Fe-4S] cluster serves as cofactor. Requires [2Fe-2S] cluster as cofactor.

The catalysed reaction is (4R,5S)-dethiobiotin + (sulfur carrier)-SH + 2 reduced [2Fe-2S]-[ferredoxin] + 2 S-adenosyl-L-methionine = (sulfur carrier)-H + biotin + 2 5'-deoxyadenosine + 2 L-methionine + 2 oxidized [2Fe-2S]-[ferredoxin]. The protein operates within cofactor biosynthesis; biotin biosynthesis; biotin from 7,8-diaminononanoate: step 2/2. Its function is as follows. Catalyzes the conversion of dethiobiotin (DTB) to biotin by the insertion of a sulfur atom into dethiobiotin via a radical-based mechanism. The protein is Biotin synthase of Nostoc punctiforme (strain ATCC 29133 / PCC 73102).